Here is a 565-residue protein sequence, read N- to C-terminus: MAAPKTSIPSLAECQCGICMEILLEPVTLPCNHTLCNPCFQSTVEKANLCCPFCRRRVSSWTRYHTRRNSLVNTDLWEIIQKHYAKECKLRISGQESKEIIDECQPVRRLSEPGELRREYEEEISRVEAERQASKEEENKASEEYIQRLLAEEEEEEKRQREKRRSEMEEQLRGDEELARSLSTSINSNYERNTLASPLSSRKSDPVTNKSQKKNTSKQKTFGDIQKYLSPKLKPGTALACKAELEEDICKSKETDRSDTKSPVLQDTEIEKNIPTLSPQTCLETQEQGSESSAGIPGPQLCVGDTKESLEGKVETVSTSPDDLCIVNDDGPRATVFYSNEAAVNSSSKIENEEYSVTGVPQLTGGNRVPTESRVYHLLVEEEISDRENQESVFEEVMDPCFSAKRRKIFIESSSDQEETEVNFTQKLIDLEHMLFERHKQEEQDRLLALQLQKEVDKEQMVPNRQKGSPDQYQLRTPSPPDRLLNRQRKNSKDRNSLQQTNADHSKSPRNTKGDYWEPFKNTWKDSVNGTKMPTSTQDNCNVSKSAYTVQHRKSQRSIVQMFQR.

The RING-type zinc-finger motif lies at 16–55 (CGICMEILLEPVTLPCNHTLCNPCFQSTVEKANLCCPFCR). Phosphoserine is present on S70. Positions 110–128 (LSEPGELRREYEEEISRVE) match the LR motif 1 motif. S134 carries the post-translational modification Phosphoserine. A UMI motif motif is present at residues 143–151 (EEYIQRLLA). Disordered regions lie at residues 150–223 (LAEE…KTFG) and 252–302 (SKET…PQLC). A compositionally biased stretch (basic and acidic residues) spans 157–179 (EKRQREKRRSEMEEQLRGDEELA). The MIU motif 1 motif lies at 168–191 (MEEQLRGDEELARSLSTSINSNYE). Residues 181 to 201 (SLSTSINSNYERNTLASPLSS) show a composition bias toward polar residues. S197 carries the post-translational modification Phosphoserine. A Glycyl lysine isopeptide (Lys-Gly) (interchain with G-Cter in SUMO2) cross-link involves residue K210. Residues 275-293 (PTLSPQTCLETQEQGSESS) show a composition bias toward polar residues. A phosphoserine mark is found at S413 and S414. An MIU motif 2 motif is present at residues 438–461 (RHKQEEQDRLLALQLQKEVDKEQM). The interval 458-521 (KEQMVPNRQK…TKGDYWEPFK (64 aa)) is disordered. The short motif at 465-476 (RQKGSPDQYQLR) is the LR motif 2 element. Residues 466-477 (QKGSPDQYQLRT) show a composition bias toward polar residues. Position 469 is a phosphoserine (S469). Over residues 504 to 518 (DHSKSPRNTKGDYWE) the composition is skewed to basic and acidic residues. K525 is covalently cross-linked (Glycyl lysine isopeptide (Lys-Gly) (interchain with G-Cter in SUMO2)).

This sequence belongs to the RNF168 family. As to quaternary structure, monomer. Interacts with UBE2N/UBC13. Sumoylated with SUMO1 by PIAS4 in response to double-strand breaks (DSBs). In terms of processing, ubiquitinated.

It is found in the nucleus. It catalyses the reaction S-ubiquitinyl-[E2 ubiquitin-conjugating enzyme]-L-cysteine + [acceptor protein]-L-lysine = [E2 ubiquitin-conjugating enzyme]-L-cysteine + N(6)-ubiquitinyl-[acceptor protein]-L-lysine.. It functions in the pathway protein modification; protein ubiquitination. E3 ubiquitin-protein ligase required for accumulation of repair proteins to sites of DNA damage. Acts with UBE2N/UBC13 to amplify the RNF8-dependent histone ubiquitination. Recruited to sites of DNA damage at double-strand breaks (DSBs) by binding to ubiquitinated histone H2A and H2AX and amplifies the RNF8-dependent H2A ubiquitination, promoting the formation of 'Lys-63'-linked ubiquitin conjugates. This leads to concentrate ubiquitinated histones H2A and H2AX at DNA lesions to the threshold required for recruitment of TP53BP1 and BRCA1. Also recruited at DNA interstrand cross-links (ICLs) sites and promotes accumulation of 'Lys-63'-linked ubiquitination of histones H2A and H2AX, leading to recruitment of FAAP20 and Fanconi anemia (FA) complex, followed by interstrand cross-link repair. H2A ubiquitination also mediates the ATM-dependent transcriptional silencing at regions flanking DSBs in cis, a mechanism to avoid collision between transcription and repair intermediates. Also involved in class switch recombination in immune system, via its role in regulation of DSBs repair. Following DNA damage, promotes the ubiquitination and degradation of JMJD2A/KDM4A in collaboration with RNF8, leading to unmask H4K20me2 mark and promote the recruitment of TP53BP1 at DNA damage sites. Not able to initiate 'Lys-63'-linked ubiquitination in vitro; possibly due to partial occlusion of the UBE2N/UBC13-binding region. Catalyzes monoubiquitination of 'Lys-13' and 'Lys-15' of nucleosomal histone H2A (H2AK13Ub and H2AK15Ub, respectively). This is E3 ubiquitin-protein ligase RNF168 from Mus musculus (Mouse).